Reading from the N-terminus, the 99-residue chain is uncharacterized protein (99 aa).

This is an uncharacterized protein from Bacillus subtilis (strain 168).